The sequence spans 88 residues: MPRLVALVKGRVQGVGYRAFAQKKALELGLSGYAENLPDGRVEVVAEGPKEALELFLHHLKQGPRLARVEAVEVQWGEEAGLKGFHVY.

The Acylphosphatase-like domain maps to 3-88; the sequence is RLVALVKGRV…EAGLKGFHVY (86 aa). Catalysis depends on residues Arg18 and Asn36.

This sequence belongs to the acylphosphatase family.

It catalyses the reaction an acyl phosphate + H2O = a carboxylate + phosphate + H(+). The chain is Acylphosphatase (acyP) from Thermus thermophilus (strain ATCC BAA-163 / DSM 7039 / HB27).